We begin with the raw amino-acid sequence, 509 residues long: ATP synthase subunit alpha (509 aa).

Residue 169–176 participates in ATP binding; sequence GDRQTGKT.

Belongs to the ATPase alpha/beta chains family. In terms of assembly, F-type ATPases have 2 components, CF(1) - the catalytic core - and CF(0) - the membrane proton channel. CF(1) has five subunits: alpha(3), beta(3), gamma(1), delta(1), epsilon(1). CF(0) has three main subunits: a(1), b(2) and c(9-12). The alpha and beta chains form an alternating ring which encloses part of the gamma chain. CF(1) is attached to CF(0) by a central stalk formed by the gamma and epsilon chains, while a peripheral stalk is formed by the delta and b chains.

It is found in the cell inner membrane. It catalyses the reaction ATP + H2O + 4 H(+)(in) = ADP + phosphate + 5 H(+)(out). Functionally, produces ATP from ADP in the presence of a proton gradient across the membrane. The alpha chain is a regulatory subunit. The protein is ATP synthase subunit alpha of Sinorhizobium medicae (strain WSM419) (Ensifer medicae).